The chain runs to 70 residues: Putative RNA-binding protein YbcJ (70 aa).

The region spanning 12-68 (VELCDLLKLEGWSESGAQAKIAIAEGQVKVDGAVETRKRCKIVAGQTVSFAGHSVQV) is the S4 RNA-binding domain.

In pull-down experiments interacts with CedA.

In terms of biological role, its structure and the presence of conserved basic residues indicates that it probably binds RNA. This Escherichia coli (strain K12) protein is Putative RNA-binding protein YbcJ (ybcJ).